The sequence spans 142 residues: Transcription antitermination protein NusB (142 aa).

Belongs to the NusB family. In terms of assembly, monomer or homodimer; in equilibrium, with a preference for the monomer. Dimerization may be employed to package NusB in an inactive form until recruitment into antitermination complexes.

In terms of biological role, involved in transcription antitermination. Required for transcription of ribosomal RNA (rRNA) genes. Binds specifically to the boxA antiterminator sequence of the ribosomal RNA (rrn) operons. This is Transcription antitermination protein NusB from Thermotoga maritima (strain ATCC 43589 / DSM 3109 / JCM 10099 / NBRC 100826 / MSB8).